A 148-amino-acid chain; its full sequence is Large ribosomal subunit protein bL9 (148 aa).

Belongs to the bacterial ribosomal protein bL9 family.

Its function is as follows. Binds to the 23S rRNA. This chain is Large ribosomal subunit protein bL9, found in Aliarcobacter butzleri (strain RM4018) (Arcobacter butzleri).